Reading from the N-terminus, the 365-residue chain is Nudix hydrolase 24, chloroplastic (365 aa).

A chloroplast-targeting transit peptide spans 1–30 (MASAFCSLCPTPTSLFSSHALIPTLQWRSS). Residues 196–337 (GYAIHVNGYV…KDSCSLVIID (142 aa)) form the Nudix hydrolase domain. Residues 235–256 (GGLPHGISVCENLVKECEEEAG) carry the Nudix box motif. Glu250 and Glu254 together coordinate Mg(2+).

The protein belongs to the Nudix hydrolase family. The cofactor is Mg(2+). It depends on Mn(2+) as a cofactor. As to expression, expressed in leaves.

Its subcellular location is the plastid. The protein localises to the chloroplast. Functionally, probably mediates the hydrolysis of some nucleoside diphosphate derivatives. The sequence is that of Nudix hydrolase 24, chloroplastic (NUDT24) from Arabidopsis thaliana (Mouse-ear cress).